Consider the following 316-residue polypeptide: Ribose-phosphate pyrophosphokinase (316 aa).

Residues 37–39 (DGE) and 96–97 (RQ) contribute to the ATP site. 2 residues coordinate Mg(2+): histidine 131 and aspartate 171. Lysine 195 is a catalytic residue. D-ribose 5-phosphate contacts are provided by residues arginine 197, aspartate 221, and 225–229 (DTGGT).

The protein belongs to the ribose-phosphate pyrophosphokinase family. Class I subfamily. As to quaternary structure, homohexamer. It depends on Mg(2+) as a cofactor.

Its subcellular location is the cytoplasm. It catalyses the reaction D-ribose 5-phosphate + ATP = 5-phospho-alpha-D-ribose 1-diphosphate + AMP + H(+). The protein operates within metabolic intermediate biosynthesis; 5-phospho-alpha-D-ribose 1-diphosphate biosynthesis; 5-phospho-alpha-D-ribose 1-diphosphate from D-ribose 5-phosphate (route I): step 1/1. In terms of biological role, involved in the biosynthesis of the central metabolite phospho-alpha-D-ribosyl-1-pyrophosphate (PRPP) via the transfer of pyrophosphoryl group from ATP to 1-hydroxyl of ribose-5-phosphate (Rib-5-P). The protein is Ribose-phosphate pyrophosphokinase of Haemophilus ducreyi (strain 35000HP / ATCC 700724).